The primary structure comprises 643 residues: Thioredoxin reductase 3 (643 aa).

The disordered stretch occupies residues 1–53 (MERSPPQSPGPGKAGDAPNRRSGHVRGARVLSPPGRRARLSSPGPSRSSEARE). Asymmetric dimethylarginine; alternate is present on arginine 26. Arginine 26 carries the post-translational modification Omega-N-methylarginine; alternate. Serine 41 and serine 42 each carry phosphoserine. A Glutaredoxin domain is found at 56–156 (RRHLVGLIER…KLLQEDLAYD (101 aa)). 158–187 (DLIIIGGGSGGLSCAKEAAILGKKVMVLDF) contributes to the FAD binding site. Cysteine 203 and cysteine 208 are oxidised to a cystine. At lysine 379 the chain carries N6-succinyllysine. Histidine 616 serves as the catalytic Proton acceptor. Positions 641–642 (CU) form a cross-link, cysteinyl-selenocysteine (Cys-Sec). A non-standard amino acid (selenocysteine) is located at residue selenocysteine 642.

It belongs to the class-I pyridine nucleotide-disulfide oxidoreductase family. In terms of assembly, homodimer. FAD is required as a cofactor.

It localises to the cytoplasm. It is found in the nucleus. The protein resides in the microsome. Its subcellular location is the endoplasmic reticulum. The catalysed reaction is [thioredoxin]-dithiol + NADP(+) = [thioredoxin]-disulfide + NADPH + H(+). Functionally, displays thioredoxin reductase, glutaredoxin and glutathione reductase activities. Catalyzes disulfide bond isomerization. Promotes disulfide bond formation between GPX4 and various sperm proteins and may play a role in sperm maturation by promoting formation of sperm structural components. The sequence is that of Thioredoxin reductase 3 from Homo sapiens (Human).